The primary structure comprises 205 residues: Holliday junction branch migration complex subunit RuvA (205 aa).

A domain I region spans residues 1–63 (MIDFVEGTLS…EDAILLYGFA (63 aa)). The interval 64 to 142 (TRDERDLFRK…GYTPSAILTV (79 aa)) is domain II. Residues 143-153 (AAGDLTAGEQA) are flexible linker. Residues 153 to 205 (AVSALNEALDALTALGYSDGELQKIRNTLSEKSKEGDGVEKLIKQGLALLMRG) form a domain III region.

This sequence belongs to the RuvA family. In terms of assembly, homotetramer. Forms an RuvA(8)-RuvB(12)-Holliday junction (HJ) complex. HJ DNA is sandwiched between 2 RuvA tetramers; dsDNA enters through RuvA and exits via RuvB. An RuvB hexamer assembles on each DNA strand where it exits the tetramer. Each RuvB hexamer is contacted by two RuvA subunits (via domain III) on 2 adjacent RuvB subunits; this complex drives branch migration. In the full resolvosome a probable DNA-RuvA(4)-RuvB(12)-RuvC(2) complex forms which resolves the HJ.

The protein resides in the cytoplasm. The RuvA-RuvB-RuvC complex processes Holliday junction (HJ) DNA during genetic recombination and DNA repair, while the RuvA-RuvB complex plays an important role in the rescue of blocked DNA replication forks via replication fork reversal (RFR). RuvA specifically binds to HJ cruciform DNA, conferring on it an open structure. The RuvB hexamer acts as an ATP-dependent pump, pulling dsDNA into and through the RuvAB complex. HJ branch migration allows RuvC to scan DNA until it finds its consensus sequence, where it cleaves and resolves the cruciform DNA. The protein is Holliday junction branch migration complex subunit RuvA of Brevibacillus brevis (strain 47 / JCM 6285 / NBRC 100599).